Reading from the N-terminus, the 73-residue chain is Beta-1 adrenergic receptor (73 aa).

A helical membrane pass occupies residues 1 to 12 (ISALVSFLPILM). The Extracellular segment spans residues 13–38 (HWWRAENDEARRCYNDPKCCDFVTNR). Cysteine 25 and cysteine 31 are oxidised to a cystine. The chain crosses the membrane as a helical span at residues 39–64 (AYAIASSVVSFYVPLCIMAFVYLRVF). Serine 44 contacts cyanopindolol. Residues 65–73 (REAQKQVKK) are Cytoplasmic-facing.

Belongs to the G-protein coupled receptor 1 family. Adrenergic receptor subfamily. ADRB1 sub-subfamily. Interacts (via C-terminus PDZ motif) with RAPGEF2; the interaction is direct. Interacts with GOPC, MAGI3 and DLG4. Post-translationally, homologous desensitization of the receptor is mediated by its phosphorylation by beta-adrenergic receptor kinase.

It localises to the cell membrane. The protein resides in the early endosome. Functionally, beta-adrenergic receptors mediate the catecholamine-induced activation of adenylate cyclase through the action of G proteins. This receptor binds epinephrine and norepinephrine with approximately equal affinity. Mediates Ras activation through G(s)-alpha- and cAMP-mediated signaling. In dorsal pons neurons, involved in the regulation of sleep/wake behaviors. This is Beta-1 adrenergic receptor (ADRB1) from Meriones unguiculatus (Mongolian jird).